A 388-amino-acid polypeptide reads, in one-letter code: Chaperone protein DnaJ (388 aa).

Residues 5–69 form the J domain; the sequence is DYYDVLGVDK…QKKAQYDQFG (65 aa). A CR-type zinc finger spans residues 145–227; it reads GKKTDITYTR…CHGKGTIDKK (83 aa). Zn(2+) contacts are provided by Cys158, Cys161, Cys175, Cys178, Cys201, Cys204, Cys215, and Cys218. 4 CXXCXGXG motif repeats span residues 158–165, 175–182, 201–208, and 215–222; these read CPTCDGSG, CDKCHGTG, CDKCGGRG, and CQTCHGKG.

The protein belongs to the DnaJ family. As to quaternary structure, homodimer. Requires Zn(2+) as cofactor.

It localises to the cytoplasm. Participates actively in the response to hyperosmotic and heat shock by preventing the aggregation of stress-denatured proteins and by disaggregating proteins, also in an autonomous, DnaK-independent fashion. Unfolded proteins bind initially to DnaJ; upon interaction with the DnaJ-bound protein, DnaK hydrolyzes its bound ATP, resulting in the formation of a stable complex. GrpE releases ADP from DnaK; ATP binding to DnaK triggers the release of the substrate protein, thus completing the reaction cycle. Several rounds of ATP-dependent interactions between DnaJ, DnaK and GrpE are required for fully efficient folding. Also involved, together with DnaK and GrpE, in the DNA replication of plasmids through activation of initiation proteins. In Lactobacillus gasseri (strain ATCC 33323 / DSM 20243 / BCRC 14619 / CIP 102991 / JCM 1131 / KCTC 3163 / NCIMB 11718 / NCTC 13722 / AM63), this protein is Chaperone protein DnaJ.